A 1063-amino-acid chain; its full sequence is Exportin-1 (1063 aa).

The Importin N-terminal domain occupies 43–109 (AQSILTTLKE…KKYVVSLIIK (67 aa)). The interval 1034–1063 (AEEQSNKHQMQRNIPGMLNPHELPEDMQDE) is disordered.

The protein belongs to the exportin family. Interacts with Clbn (via its N-terminus). Associates with the nuclear pore complex via interaction with mbo and Nup214. Interacts with target proteins containing NES sequences such as actin and dl. High expression observed in the developing embryonic brain, hind gut and posterior spiracles shortly before dorsal closure; and in the ventral nerve cord, midgut and somatic musculature shortly after dorsal closure. Expression increases when the tissue is well developed.

Its subcellular location is the nucleus. It localises to the nucleus membrane. In terms of biological role, receptor for the leucine-rich nuclear export signal (NES). Binds cooperatively to the NES on its target protein and to the small GTPase Ran in its active GTP-bound form. Involved in the export of dl, RpS2 and the pre-40S ribosome from the nucleus to the cytoplasm. Plays an important role in nuclear pore assembly by mediating nucleoporin condensation and biogenesis of annulate lamellae. Required for the function or maintenance of certain tissues such as brain and gut. This is Exportin-1 from Drosophila melanogaster (Fruit fly).